Consider the following 156-residue polypeptide: Peptide deformylase 1 (156 aa).

Fe cation contacts are provided by cysteine 90 and histidine 132. The active site involves glutamate 133. Histidine 136 lines the Fe cation pocket.

Belongs to the polypeptide deformylase family. The cofactor is Fe(2+).

It catalyses the reaction N-terminal N-formyl-L-methionyl-[peptide] + H2O = N-terminal L-methionyl-[peptide] + formate. Functionally, removes the formyl group from the N-terminal Met of newly synthesized proteins. Requires at least a dipeptide for an efficient rate of reaction. N-terminal L-methionine is a prerequisite for activity but the enzyme has broad specificity at other positions. The polypeptide is Peptide deformylase 1 (Bacillus anthracis).